A 4095-amino-acid chain; its full sequence is Protein adenylyltransferase and cysteine protease IbpA (4095 aa).

An N-terminal signal peptide occupies residues 1-97 (MNKNCYKLIF…MVAAPNFAQS (97 aa)). Binds bovine IgG2 Fc regions lie at residues 972–1515 (SERI…FVKA) and 1116–1255 (SEVQ…FLKE). Disordered stretches follow at residues 1082 to 1117 (EVSD…LPSE), 1130 to 1154 (KEKA…LQSD), 1204 to 1223 (QEAL…AKAK), 1625 to 1652 (TVSH…TGFT), and 1705 to 1732 (EEDE…QKEE). Residues 1087–1096 (WERDPDEPDE) are compositionally biased toward acidic residues. Composition is skewed to basic and acidic residues over residues 1097 to 1117 (PDYK…LPSE) and 1130 to 1139 (KEKAQQKRQA). The stretch at 1116–1247 (SEVQDKLRQK…AKDHQIEEAL (132 aa)) forms a coiled coil. Over residues 1716–1727 (KAKAAPDATDNA) the composition is skewed to low complexity. A run of 12 repeats spans residues 2250–2271 (YSTL…SDDI), 2272–2295 (YSLL…AEGA), 2296–2317 (YDLL…SDDL), 2318–2343 (YSTV…AAGP), 2344–2365 (YSLL…GEGP), 2366–2387 (YSLL…SNST), 2388–2413 (YSTV…VAGP), 2414–2435 (YSLL…GEGP), 2436–2457 (YSLL…SDSP), 2458–2483 (YSTV…VAGP), 2484–2505 (YSLL…GEGP), and 2506–2527 (YSLL…SDSP). The tract at residues 2250-2527 (YSTLGDQNAN…RTLGGESDSP (278 aa)) is 12 X 22 AA approximate repeats. Composition is skewed to polar residues over residues 2592 to 2611 (SDTE…TRNA) and 2794 to 2803 (TAPQKTSPVK). Disordered stretches follow at residues 2592 to 2617 (SDTE…PLPP), 2765 to 2809 (TIGE…SAEG), 2825 to 2894 (AKGQ…SPKR), 2914 to 2933 (LKSK…EPIY), 2943 to 3033 (LARA…KSED), and 3049 to 3069 (NKSQ…PNYD). Positions 2880 to 2889 (PFPSEFSSEP) are enriched in low complexity. Polar residues-rich tracts occupy residues 2977-2996 (SNLS…QSVA) and 3005-3018 (AESN…QKLQ). Over residues 3052–3062 (QAKEAKSEQET) the composition is skewed to basic and acidic residues. The 138-residue stretch at 3218-3355 (LTVEMIEKLN…AEVVKEFLTE (138 aa)) folds into the Fido 1 domain. The interval 3222–4095 (MIEKLNHGLR…FNVVNYKKNN (874 aa)) is yopT-like. The segment at 3354–3698 (TELGKKSSPQ…VDFINRAKNE (345 aa)) is binds bovine IgG2 Fc. Disordered regions lie at residues 3357–3415 (GKKS…PSVP) and 3432–3454 (AELK…ATGV). Composition is skewed to polar residues over residues 3360–3379 (SSPQ…SPVT) and 3388–3401 (VENT…TIKQ). A compositionally biased stretch (basic and acidic residues) spans 3443-3454 (KAAEKSEGATGV). The segment at 3535-3557 (IPEATVKQMSHLPEFDDILTEGA) is arm region. The region spanning 3640–3777 (LTVQMIENLN…SEVVVEFLKE (138 aa)) is the Fido 2 domain. Residues 3670-3671 (KE), 3722-3724 (GNG), R3728, and Q3757 contribute to the ATP site. Residues 3783–3798 (SKEDNEQNLEKTDRTS) are compositionally biased toward basic and acidic residues. A disordered region spans residues 3783 to 3829 (SKEDNEQNLEKTDRTSTDLTESAVENSAALSSGTVRSATVSETVTET). Positions 3799–3815 (TDLTESAVENSAALSSG) are enriched in polar residues. The segment covering 3816–3829 (TVRSATVSETVTET) has biased composition (low complexity). Catalysis depends on for cysteine protease activity residues C3910, H4033, and D4048.

In the central section; belongs to the fic family. The protein in the C-terminal section; belongs to the peptidase C58 family. Immunoglobulin-binding protein. In terms of processing, the long form of the protein is probably processed, and/or the transcript may be subject to differential translational initiation.

It is found in the secreted. The protein localises to the cell outer membrane. It catalyses the reaction L-tyrosyl-[protein] + ATP = O-(5'-adenylyl)-L-tyrosyl-[protein] + diphosphate. The enzyme catalyses L-threonyl-[protein] + ATP = 3-O-(5'-adenylyl)-L-threonyl-[protein] + diphosphate. In terms of biological role, adenylyltransferase involved in virulence by mediating the addition of adenosine 5'-monophosphate (AMP) to specific tyrosine residue of host Rho GTPases RhoA, Rac and Cdc42. The resulting AMPylation inactivates Rho GTPases, thereby inhibiting actin assembly in infected cells. Probably also acts as a cysteine protease, which may play a central role after invasion of host cell and in virulence. Possible member (with IbpB) of a 2 partner secretion. Probably able to bind bovine epithelial cells (host cells). May participate in the formation of fibrils at the surface of the bacteria. This is Protein adenylyltransferase and cysteine protease IbpA (ibpA) from Histophilus somni (strain 2336) (Haemophilus somnus).